A 211-amino-acid chain; its full sequence is Protein-L-isoaspartate O-methyltransferase 1 (211 aa).

Serine 62 is a catalytic residue.

Belongs to the methyltransferase superfamily. L-isoaspartyl/D-aspartyl protein methyltransferase family.

The protein localises to the cytoplasm. The catalysed reaction is [protein]-L-isoaspartate + S-adenosyl-L-methionine = [protein]-L-isoaspartate alpha-methyl ester + S-adenosyl-L-homocysteine. Its function is as follows. Catalyzes the methyl esterification of L-isoaspartyl residues in peptides and proteins that result from spontaneous decomposition of normal L-aspartyl and L-asparaginyl residues. It plays a role in the repair and/or degradation of damaged proteins. The protein is Protein-L-isoaspartate O-methyltransferase 1 of Shewanella sediminis (strain HAW-EB3).